The primary structure comprises 241 residues: Superantigen-like protein 13 (241 aa).

The signal sequence occupies residues 1 to 26 (MNNNITKKIILSTTLLLLGTASTQFP).

This sequence belongs to the staphylococcal/streptococcal toxin family. In terms of assembly, interacts with host FPR2; this interaction promotes neutrophil chemotaxis.

Functionally, acts as a pathogen alarming molecule by acting on host neutrophil chemotactic factors FPR2. Plays a role of chemoattractant and induces degranulation and oxidative burst in neutrophils. The chain is Superantigen-like protein 13 from Staphylococcus aureus (strain Newman).